Here is a 352-residue protein sequence, read N- to C-terminus: NAD-dependent protein deacetylase sirtuin-2 (352 aa).

The residue at position 16 (Ser16) is a Phosphoserine. Residues 20-301 enclose the Deacetylase sirtuin-type domain; sequence RLLDELTLEG…LALAELLGWK (282 aa). NAD(+) is bound by residues 48-52 and 58-60; these read AGIST and DFR. Ser63 carries the post-translational modification Phosphoserine. 130 to 133 is an NAD(+) binding site; the sequence is QNID. Residue His150 is the Proton acceptor of the active site. 2 residues coordinate Zn(2+): Cys158 and Cys163. Ser170 bears the Phosphoserine mark. Residues Cys184 and Cys187 each coordinate Zn(2+). NAD(+) contacts are provided by residues 225–226, 249–251, and Cys287; these read TS and NKE. The segment at 314-352 is disordered; sequence SIDAQSGAGVPNPSTSASPKKSPPPAKDEARTTEREKPQ. Over residues 324–333 the composition is skewed to low complexity; sequence PNPSTSASPK. A phosphoserine mark is found at Ser331 and Ser335. Basic and acidic residues predominate over residues 339–352; that stretch reads AKDEARTTEREKPQ.

Belongs to the sirtuin family. Class I subfamily. In terms of assembly, interacts with CDC20, FOXO3 and FZR1. Associates with microtubules in primary cortical mature neurons. Homotrimer. Interacts (via both phosphorylated, unphosphorylated, active or inactive forms) with HDAC6; the interaction is necessary for the complex to interact with alpha-tubulin, suggesting that these proteins belong to a large complex that deacetylates the cytoskeleton. Interacts with FOXO1; the interaction is disrupted upon serum-starvation or oxidative stress, leading to increased level of acetylated FOXO1 and induction of autophagy. Interacts with RELA; the interaction occurs in the cytoplasm and is increased in a TNF-alpha-dependent manner. Interacts with HOXA10; the interaction is direct. Interacts with YWHAB and YWHAG; the interactions occur in a AKT-dependent manner and increase SIRT2-dependent TP53 deacetylation. Interacts with MAPK1/ERK2 and MAPK3/ERK1; the interactions increase SIRT2 stability and deacetylation activity. Interacts (phosphorylated form) with KMT5A isoform 2; the interaction is direct, stimulates KMT5A-mediated methyltransferase activity on histone at 'Lys-20' (H4K20me1) and is increased in a H(2)O(2)-induced oxidative stress-dependent manner. Interacts with G6PD; the interaction is enhanced by H(2)O(2) treatment. Interacts with a G1/S-specific cyclin E-CDK2 complex. Interacts with AURKA, CDK5R1 (p35 form) and CDK5 and HIF1A. Interacts with the tRNA ligase SARS1; recruited to the VEGFA promoter via interaction with SARS1. Interacts with BEX4; negatively regulates alpha-tubulin deacetylation by SIRT2. Interacts with MORN3; the interaction enhances the ubiquitination of p53/TP53. Zn(2+) is required as a cofactor. Phosphorylated at phosphoserine and phosphothreonine. Phosphorylated at Ser-331 by a mitotic kinase CDK1/cyclin B at the G2/M transition; phosphorylation regulates the delay in cell-cycle progression. Phosphorylated at Ser-331 by a mitotic kinase G1/S-specific cyclin E/Cdk2 complex; phosphorylation inactivates SIRT2-mediated alpha-tubulin deacetylation and thereby negatively regulates cell adhesion, cell migration and neurite outgrowth during neuronal differentiation. Phosphorylated by cyclin A/Cdk2 and p35-Cdk5 complexes and to a lesser extent by the cyclin D3/Cdk4 and cyclin B/Cdk1, in vitro. Dephosphorylated at Ser-331 by CDC14A and CDC14B around early anaphase. Post-translationally, acetylated by EP300; acetylation leads both to the decreased of SIRT2-mediated alpha-tubulin deacetylase activity and SIRT2-mediated down-regulation of TP53 transcriptional activity. In terms of processing, ubiquitinated.

The protein localises to the nucleus. The protein resides in the cytoplasm. It is found in the perinuclear region. Its subcellular location is the cytoskeleton. It localises to the microtubule organizing center. The protein localises to the centrosome. The protein resides in the centriole. It is found in the spindle. Its subcellular location is the midbody. It localises to the chromosome. The protein localises to the perikaryon. The protein resides in the cell projection. It is found in the growth cone. Its subcellular location is the myelin membrane. It catalyses the reaction N(6)-acetyl-L-lysyl-[protein] + NAD(+) + H2O = 2''-O-acetyl-ADP-D-ribose + nicotinamide + L-lysyl-[protein]. The catalysed reaction is N(6)-tetradecanoyl-L-lysyl-[protein] + NAD(+) + H2O = 2''-O-tetradecanoyl-ADP-D-ribose + nicotinamide + L-lysyl-[protein]. It carries out the reaction N(6)-hexadecanoyl-L-lysyl-[protein] + NAD(+) + H2O = 2''-O-hexadecanoyl-ADP-D-ribose + nicotinamide + L-lysyl-[protein]. Inhibited by Sirtinol, A3 and M15 small molecules. Inhibited by nicotinamide. Inhibited by a macrocyclic peptide inhibitor S2iL5. Inhibited by EP300-induced acetylation. Its function is as follows. NAD-dependent protein deacetylase, which deacetylates internal lysines on histone and alpha-tubulin as well as many other proteins such as key transcription factors. Participates in the modulation of multiple and diverse biological processes such as cell cycle control, genomic integrity, microtubule dynamics, cell differentiation, metabolic networks, and autophagy. Plays a major role in the control of cell cycle progression and genomic stability. Functions in the antephase checkpoint preventing precocious mitotic entry in response to microtubule stress agents, and hence allowing proper inheritance of chromosomes. Positively regulates the anaphase promoting complex/cyclosome (APC/C) ubiquitin ligase complex activity by deacetylating CDC20 and FZR1, then allowing progression through mitosis. Associates both with chromatin at transcriptional start sites (TSSs) and enhancers of active genes. Plays a role in cell cycle and chromatin compaction through epigenetic modulation of the regulation of histone H4 'Lys-20' methylation (H4K20me1) during early mitosis. Specifically deacetylates histone H4 at 'Lys-16' (H4K16ac) between the G2/M transition and metaphase enabling H4K20me1 deposition by KMT5A leading to ulterior levels of H4K20me2 and H4K20me3 deposition throughout cell cycle, and mitotic S-phase progression. Deacetylates KMT5A modulating KMT5A chromatin localization during the mitotic stress response. Also deacetylates histone H3 at 'Lys-57' (H3K56ac) during the mitotic G2/M transition. During oocyte meiosis progression, may deacetylate histone H4 at 'Lys-16' (H4K16ac) and alpha-tubulin, regulating spindle assembly and chromosome alignment by influencing microtubule dynamics and kinetochore function. Deacetylates histone H4 at 'Lys-16' (H4K16ac) at the VEGFA promoter and thereby contributes to regulate expression of VEGFA, a key regulator of angiogenesis. Deacetylates alpha-tubulin at 'Lys-40' and hence controls neuronal motility, oligodendroglial cell arbor projection processes and proliferation of non-neuronal cells. Phosphorylation at Ser-368 by a G1/S-specific cyclin E-CDK2 complex inactivates SIRT2-mediated alpha-tubulin deacetylation, negatively regulating cell adhesion, cell migration and neurite outgrowth during neuronal differentiation. Deacetylates PARD3 and participates in the regulation of Schwann cell peripheral myelination formation during early postnatal development and during postinjury remyelination. Involved in several cellular metabolic pathways. Plays a role in the regulation of blood glucose homeostasis by deacetylating and stabilizing phosphoenolpyruvate carboxykinase PCK1 activity in response to low nutrient availability. Acts as a key regulator in the pentose phosphate pathway (PPP) by deacetylating and activating the glucose-6-phosphate G6PD enzyme, and therefore, stimulates the production of cytosolic NADPH to counteract oxidative damage. Maintains energy homeostasis in response to nutrient deprivation as well as energy expenditure by inhibiting adipogenesis and promoting lipolysis. Attenuates adipocyte differentiation by deacetylating and promoting FOXO1 interaction to PPARG and subsequent repression of PPARG-dependent transcriptional activity. Plays a role in the regulation of lysosome-mediated degradation of protein aggregates by autophagy in neuronal cells. Deacetylates FOXO1 in response to oxidative stress or serum deprivation, thereby negatively regulating FOXO1-mediated autophagy. Deacetylates a broad range of transcription factors and co-regulators regulating target gene expression. Deacetylates transcriptional factor FOXO3 stimulating the ubiquitin ligase SCF(SKP2)-mediated FOXO3 ubiquitination and degradation. Deacetylates HIF1A and therefore promotes HIF1A degradation and inhibition of HIF1A transcriptional activity in tumor cells in response to hypoxia. Deacetylates RELA in the cytoplasm inhibiting NF-kappaB-dependent transcription activation upon TNF-alpha stimulation. Inhibits transcriptional activation by deacetylating p53/TP53 and EP300. Also deacetylates EIF5A. Functions as a negative regulator on oxidative stress-tolerance in response to anoxia-reoxygenation conditions. Plays a role as tumor suppressor. In addition to protein deacetylase activity, also has activity toward long-chain fatty acyl groups and mediates protein-lysine demyristoylation and depalmitoylation of target proteins, such as ARF6 and KRAS, thereby regulating their association with membranes. This is NAD-dependent protein deacetylase sirtuin-2 (SIRT2) from Pongo abelii (Sumatran orangutan).